A 627-amino-acid chain; its full sequence is Neuronal acetylcholine receptor subunit alpha-4 (627 aa).

Positions 1-31 are cleaved as a signal peptide; that stretch reads MELGGPGAPPPPLLPPLLLLLGAGFLPASSP. Over 32 to 244 the chain is Extracellular; that stretch reads VETRAHAEER…ITYAFVIRRL (213 aa). Asn59 carries N-linked (GlcNAc...) asparagine glycosylation. Ca(2+) is bound by residues Val78 and Glu80. N-linked (GlcNAc...) asparagine glycosylation is found at Asn109 and Asn176. 2 disulfide bridges follow: Cys163–Cys177 and Cys227–Cys228. Residues 245–269 form a helical membrane-spanning segment; it reads PLFYTINLIVPCLLISCLTVLVFYL. Residue Cys273 is the site of S-palmitoyl cysteine attachment. Transmembrane regions (helical) follow at residues 277-295 and 311-332; these read VTLC…LLIT and YLLF…VLNV. At 333–600 the chain is on the cytoplasmic side; the sequence is HHRSPRTHTM…WKYVAMVIDR (268 aa). Residues 384–399 show a composition bias toward low complexity; it reads PGFWPEPEGEPGVVSG. Residues 384–463 form a disordered region; that stretch reads PGFWPEPEGE…PPPSTRAPGL (80 aa). Ser427 is subject to Phosphoserine. The span at 444 to 458 shows a compositional bias: pro residues; the sequence is SPCPLPDSCRPPPST. Position 541 is a phosphoserine (Ser541). The helical transmembrane segment at 601-619 threads the bilayer; the sequence is IFLWVFVIVCLLGTAGLFL.

The protein belongs to the ligand-gated ion channel (TC 1.A.9) family. Acetylcholine receptor (TC 1.A.9.1) subfamily. Alpha-4/CHRNA4 sub-subfamily. In terms of assembly, neuronal AChR is composed of two different types of subunits: alpha and beta. CHRNA4 forms heteropentameric neuronal acetylcholine receptors with CHRNB2 and CHRNB4, as well as CHRNA5 and CHRNB3 as accesory subunits. Found in two major stoichiometric forms, LS (low agonist sensitivity): (CHRNA4)3:(CHRNB2)2 and HS (high agonist sensitivity): (CHRNA4)2:(CHRNB2)3, the two stoichiometric forms differ in their unitary conductance, calcium permeability, ACh sensitivity and potentiation by divalent cation. Cells produce predominantly an (CHRNA4)3:(CHRNB2)2 nAChR. The (CHRNA4)2:(CHRNB2)3 expression is selectively up-regulated by nicotine and has lower single channel conductance and calcium permeability. In the striatum, also forms CHRNA4:CHRNA6:CHRNB2 complexes. Also found in the stoichiometric form: (CHRNA4:CHRNB2)2:CHRNB3. Interacts with RIC3; which is required for proper folding and assembly. Interacts with LYPD6.

The protein resides in the synaptic cell membrane. It is found in the cell membrane. The catalysed reaction is Ca(2+)(in) = Ca(2+)(out). It carries out the reaction K(+)(in) = K(+)(out). The enzyme catalyses Na(+)(in) = Na(+)(out). With respect to regulation, activated by a myriad of ligands such as acetylcholine, cytisine, nicotine, choline and epibatidine. Channel potentiation by calcium is stoichiometry-selective, CHRNA4:CHRNB2 nACh receptor is achieved by calcium association with topographically distinct sites framed by anionic residues within the CHRNA4 subunit and between the CHRNA4 and CHRNB2 subunits. nAChR activity is inhibited by the antagonist alpha-conotoxins BuIA, PnIA, GID and MII, small disulfide-constrained peptides from cone snails. Component of neuronal acetylcholine receptors (nAChRs) that function as pentameric, ligand-gated cation channels with high calcium permeability among other activities. nAChRs are excitatory neurotrasnmitter receptors formed by a collection of nAChR subunits known to mediate synaptic transmission in the nervous system and the neuromuscular junction. Each nAchR subunit confers differential attributes to channel properties, including activation, deactivation and desensitization kinetics, pH sensitivity, cation permeability, and binding to allosteric modulators. CHRNA4 forms heteropentameric neuronal acetylcholine receptors with CHRNB2 and CHRNB4, as well as CHRNA5 and CHRNB3 as accesory subunits. Is the most abundant nAChR subtype expressed in the central nervous system. Found in two major stoichiometric forms,(CHRNA4)3:(CHRNB2)2 and (CHRNA4)2:(CHRNB2)3, the two stoichiometric forms differ in their unitary conductance, calcium permeability, ACh sensitivity and potentiation by divalent cation. Involved in the modulation of calcium-dependent signaling pathways, influences the release of neurotransmitters, including dopamine, glutamate and GABA. This chain is Neuronal acetylcholine receptor subunit alpha-4 (CHRNA4), found in Mustela putorius furo (European domestic ferret).